A 1127-amino-acid chain; its full sequence is Disease resistance protein RPS6 (1127 aa).

At Met-1 the chain carries N-acetylmethionine. Positions 12-176 (WSYHVFPSFS…EIANDILGKM (165 aa)) constitute a TIR domain. Glu-87 is an active-site residue. LRR repeat units lie at residues 197-221 (MSSL…GIGK), 540-563 (IDET…LFLK), 587-609 (PSRL…NFHP), 610-632 (ENLV…VHSL), 633-656 (AGLR…SMAT), 658-679 (LETL…IQYL), 680-704 (NKLN…NLKS), 766-790 (SPTL…IQNL), 791-813 (YQLE…GINL), 814-834 (DSLI…PDIS), and 835-857 (TNIS…IEKL).

Interacts with EDS1. In terms of tissue distribution, ubiquitous.

The catalysed reaction is NAD(+) + H2O = ADP-D-ribose + nicotinamide + H(+). Its function is as follows. Disease resistance (R) protein that specifically recognizes the hopA1 type III effector avirulence protein from Pseudomonas syringae. Resistance proteins guard the plant against pathogens that contain an appropriate avirulence protein via an indirect interaction with this avirulence protein. That triggers a defense system including the hypersensitive response, which restricts the pathogen growth. This Arabidopsis thaliana (Mouse-ear cress) protein is Disease resistance protein RPS6.